The following is a 395-amino-acid chain: MADLAAGVAERGPRLSLWSSLDQRLVWVVAATALLGLVMVASASISMAEQATGDPFYFFKRQIFFALLGLGMALALLQIPLATWERAGPGLLLGALALLVLVLIPGVGREVNGAVRWIPLGVFNLQVAEVVKVLLALYLAGFLVRRQQQLRTSMAAFLVPVLVSAACAFLLLLQPDFGTALMLMALAVGLLYLAGAPLWRFAALVGVLAAAAAALVVYSPYRWQRVTAFMDPWSDPFNTGFQLTQSLIAIGRGDWLGVGLGGSVQKLFYLPEAHTDFVFSVLAEELGWLGVLAVVLLFSYIVWRAMAVGWQCHRHRLPFAGYLAWAVGLALGLQAFINMGVATGLLPTKGLTLPLFSYGGSSALATGAMVGLLLRCGYELAQARAEGRRPEEAAS.

At 1–24 (MADLAAGVAERGPRLSLWSSLDQR) the chain is on the cytoplasmic side. A helical transmembrane segment spans residues 25–45 (LVWVVAATALLGLVMVASASI). Topologically, residues 46-62 (SMAEQATGDPFYFFKRQ) are periplasmic. The chain crosses the membrane as a helical span at residues 63–83 (IFFALLGLGMALALLQIPLAT). Residues 84–86 (WER) are Cytoplasmic-facing. A helical membrane pass occupies residues 87–107 (AGPGLLLGALALLVLVLIPGV). Topologically, residues 108–116 (GREVNGAVR) are periplasmic. A helical membrane pass occupies residues 117–137 (WIPLGVFNLQVAEVVKVLLAL). Topologically, residues 138–152 (YLAGFLVRRQQQLRT) are cytoplasmic. A helical transmembrane segment spans residues 153–173 (SMAAFLVPVLVSAACAFLLLL). The Periplasmic segment spans residues 174 to 178 (QPDFG). Residues 179–199 (TALMLMALAVGLLYLAGAPLW) traverse the membrane as a helical segment. A topological domain (cytoplasmic) is located at residue Arg-200. The helical transmembrane segment at 201–221 (FAALVGVLAAAAAALVVYSPY) threads the bilayer. The Periplasmic segment spans residues 222–276 (RWQRVTAFMDPWSDPFNTGFQLTQSLIAIGRGDWLGVGLGGSVQKLFYLPEAHTD). The chain crosses the membrane as a helical span at residues 277-297 (FVFSVLAEELGWLGVLAVVLL). Residues 298 to 316 (FSYIVWRAMAVGWQCHRHR) are Cytoplasmic-facing. The chain crosses the membrane as a helical span at residues 317-337 (LPFAGYLAWAVGLALGLQAFI). Over 338–352 (NMGVATGLLPTKGLT) the chain is Periplasmic. The chain crosses the membrane as a helical span at residues 353 to 373 (LPLFSYGGSSALATGAMVGLL). The Cytoplasmic segment spans residues 374-395 (LRCGYELAQARAEGRRPEEAAS).

It belongs to the SEDS family. FtsW subfamily.

It is found in the cell inner membrane. It catalyses the reaction [GlcNAc-(1-&gt;4)-Mur2Ac(oyl-L-Ala-gamma-D-Glu-L-Lys-D-Ala-D-Ala)](n)-di-trans,octa-cis-undecaprenyl diphosphate + beta-D-GlcNAc-(1-&gt;4)-Mur2Ac(oyl-L-Ala-gamma-D-Glu-L-Lys-D-Ala-D-Ala)-di-trans,octa-cis-undecaprenyl diphosphate = [GlcNAc-(1-&gt;4)-Mur2Ac(oyl-L-Ala-gamma-D-Glu-L-Lys-D-Ala-D-Ala)](n+1)-di-trans,octa-cis-undecaprenyl diphosphate + di-trans,octa-cis-undecaprenyl diphosphate + H(+). It functions in the pathway cell wall biogenesis; peptidoglycan biosynthesis. In terms of biological role, peptidoglycan polymerase that is essential for cell division. This Halorhodospira halophila (strain DSM 244 / SL1) (Ectothiorhodospira halophila (strain DSM 244 / SL1)) protein is Probable peptidoglycan glycosyltransferase FtsW.